The sequence spans 69 residues: Sec-independent protein translocase protein TatA (69 aa).

A helical transmembrane segment spans residues 1-21 (MFGLGTMEMVIILVIVLVIFG). Residues 44-69 (NAEDDAPAEPEVSKPAAAESTEKKDA) form a disordered region.

This sequence belongs to the TatA/E family. As to quaternary structure, the Tat system comprises two distinct complexes: a TatABC complex, containing multiple copies of TatA, TatB and TatC subunits, and a separate TatA complex, containing only TatA subunits. Substrates initially bind to the TatABC complex, which probably triggers association of the separate TatA complex to form the active translocon.

The protein resides in the cell inner membrane. Functionally, part of the twin-arginine translocation (Tat) system that transports large folded proteins containing a characteristic twin-arginine motif in their signal peptide across membranes. TatA could form the protein-conducting channel of the Tat system. In Magnetococcus marinus (strain ATCC BAA-1437 / JCM 17883 / MC-1), this protein is Sec-independent protein translocase protein TatA.